The chain runs to 255 residues: 1-(5-phosphoribosyl)-5-[(5-phosphoribosylamino)methylideneamino] imidazole-4-carboxamide isomerase (255 aa).

Residue Asp-8 is the Proton acceptor of the active site. Catalysis depends on Asp-129, which acts as the Proton donor.

This sequence belongs to the HisA/HisF family.

Its subcellular location is the cytoplasm. The enzyme catalyses 1-(5-phospho-beta-D-ribosyl)-5-[(5-phospho-beta-D-ribosylamino)methylideneamino]imidazole-4-carboxamide = 5-[(5-phospho-1-deoxy-D-ribulos-1-ylimino)methylamino]-1-(5-phospho-beta-D-ribosyl)imidazole-4-carboxamide. The protein operates within amino-acid biosynthesis; L-histidine biosynthesis; L-histidine from 5-phospho-alpha-D-ribose 1-diphosphate: step 4/9. The sequence is that of 1-(5-phosphoribosyl)-5-[(5-phosphoribosylamino)methylideneamino] imidazole-4-carboxamide isomerase from Prochlorococcus marinus (strain MIT 9313).